The chain runs to 523 residues: Cytochrome P450 52A3-B (523 aa).

Residues 17 to 34 traverse the membrane as a helical segment; the sequence is WYTILFGAAFTYFLSIAL. Residue cysteine 471 participates in heme binding.

The protein belongs to the cytochrome P450 family. Requires heme as cofactor.

The protein resides in the membrane. Its function is as follows. Together with an NADPH cytochrome P450 the enzyme system catalyzes the terminal hydroxylation as the first step in the assimilation of alkanes and fatty acids. This Candida maltosa (Yeast) protein is Cytochrome P450 52A3-B (CYP52A3-B).